We begin with the raw amino-acid sequence, 427 residues long: Pectin acetylesterase 5 (427 aa).

The first 35 residues, 1–35, serve as a signal peptide directing secretion; it reads MAIPRFSSLLRCRKWAKSDWLVASIGCVLIVFFLS. Asparagine 173 is a glycosylation site (N-linked (GlcNAc...) asparagine). Residues serine 209, aspartate 305, and histidine 372 each act as charge relay system in the active site. An N-linked (GlcNAc...) asparagine glycan is attached at asparagine 391.

It belongs to the pectinacetylesterase family.

It is found in the secreted. The protein localises to the cell wall. Hydrolyzes acetyl esters in homogalacturonan regions of pectin. In type I primary cell wall, galacturonic acid residues of pectin can be acetylated at the O-2 and O-3 positions. Decreasing the degree of acetylation of pectin gels in vitro alters their physical properties. The protein is Pectin acetylesterase 5 of Arabidopsis thaliana (Mouse-ear cress).